Reading from the N-terminus, the 285-residue chain is 2,3,4,5-tetrahydropyridine-2,6-dicarboxylate N-succinyltransferase (285 aa).

Residues Arg-111 and Asp-148 each coordinate substrate.

This sequence belongs to the transferase hexapeptide repeat family. In terms of assembly, homotrimer.

It is found in the cytoplasm. It catalyses the reaction (S)-2,3,4,5-tetrahydrodipicolinate + succinyl-CoA + H2O = (S)-2-succinylamino-6-oxoheptanedioate + CoA. The protein operates within amino-acid biosynthesis; L-lysine biosynthesis via DAP pathway; LL-2,6-diaminopimelate from (S)-tetrahydrodipicolinate (succinylase route): step 1/3. The protein is 2,3,4,5-tetrahydropyridine-2,6-dicarboxylate N-succinyltransferase of Rhizobium meliloti (strain 1021) (Ensifer meliloti).